A 2250-amino-acid chain; its full sequence is RNA1 polyprotein (2250 aa).

Over residues 346–371 (SPTVTPSSTPSTSRSSSPEPRVSSPS) the composition is skewed to low complexity. The disordered stretch occupies residues 346–372 (SPTVTPSSTPSTSRSSSPEPRVSSPSG). The SF3 helicase domain maps to 849 to 1020 (LRDAHNALSR…PHFHEFNLLA (172 aa)). The chain crosses the membrane as a helical span at residues 1225 to 1245 (VALCAVLLVGYLIIKFAIFLF). Residue S1299 is modified to O-(5'-phospho-RNA)-serine. The 214-residue stretch at 1319-1532 (GPEEEPSQSL…YAQIVTLDDF (214 aa)) folds into the Peptidase C3 domain. Catalysis depends on for picornain 3C-like protease activity residues H1362, D1400, and C1495. The RdRp catalytic domain occupies 1814 to 1956 (TNWFNGDYSR…SVNDVITEKF (143 aa)).

It belongs to the comoviridae genome polyprotein B family. Specific enzymatic cleavages by picornain 3C-like protease in vivo yield mature proteins. Picornain 3C-like protease is autocatalytically processed. In terms of processing, viral genome-linked protein (VPg) is uridylylated by the polymerase and is covalently linked to the 5'-end of genomic RNA. This uridylylated form acts as a nucleotide-peptide primer for the polymerase.

The protein resides in the host membrane. It carries out the reaction RNA(n) + a ribonucleoside 5'-triphosphate = RNA(n+1) + diphosphate. Its function is as follows. Picornain 3C-like protease is a thiol protease that probably cleaves the B and M polyproteins. Viral genome-linked protein (VPg) plays a role in RNA replication. The sequence is that of RNA1 polyprotein from Balsamorhiza sagittata (Apple).